A 250-amino-acid chain; its full sequence is Small ribosomal subunit protein uS3 (250 aa).

In terms of domain architecture, KH type-2 spans 39-111; it reads IRPLIKNHYP…KVQINIFEVK (73 aa).

This sequence belongs to the universal ribosomal protein uS3 family. As to quaternary structure, part of the 30S ribosomal subunit. Forms a tight complex with proteins S10 and S14.

In terms of biological role, binds the lower part of the 30S subunit head. Binds mRNA in the 70S ribosome, positioning it for translation. The protein is Small ribosomal subunit protein uS3 of Ziziphus jujuba witches'-broom phytoplasma.